Here is a 1065-residue protein sequence, read N- to C-terminus: Tubulin glycylase 3C (1065 aa).

6 disordered regions span residues 1–146, 158–182, 301–326, 341–360, 381–482, and 708–755; these read MSSL…REDK, IREQKEVNLESQTEQSDHSNVTKSK, STQKQLVRASSAEGDKEKDDKKDIAK, EKKRQEIAKEEEEKKKKEQL, FFVD…GNGS, and NKQK…EKQM. The segment covering 23–53 has biased composition (low complexity); that stretch reads QEGNQEDLNNQNDHNLNNNELDSLSSPPSDN. The segment covering 54-63 has biased composition (acidic residues); that stretch reads YNEEEFEQED. Over residues 73–92 the composition is skewed to polar residues; that stretch reads QNASQNNISQTQRISQTQLP. Residues 122 to 146 are compositionally biased toward basic and acidic residues; sequence LMEKKKKEQEEKEKKELKLKKREDK. A compositionally biased stretch (polar residues) spans 166–179; sequence LESQTEQSDHSNVT. Residues 313 to 326 are compositionally biased toward basic and acidic residues; sequence EGDKEKDDKKDIAK. Over residues 385-403 the composition is skewed to basic and acidic residues; the sequence is VPEKKPKKEKKKNESKEDN. Residues 404–423 show a composition bias toward polar residues; sequence IQITSPKLNSTKSLSSQITR. The segment covering 424–450 has biased composition (basic and acidic residues); it reads KTNDAKKVEKLPKIKDSNKENHSKERN. Over residues 451-479 the composition is skewed to acidic residues; it reads EDNEEGDDGEYECDEGDEGASDGEDEDDG. In terms of domain architecture, TTL spans 633–1009; that stretch reads YFEKDPDIEK…DYGMEKSKKA (377 aa). Residues 709-721 show a composition bias toward basic residues; it reads KQKPKKKKKKSKK. Over residues 722-733 the composition is skewed to basic and acidic residues; that stretch reads DKQQGDTEKKEE. The segment covering 734–754 has biased composition (acidic residues); sequence EEGEAEDEEEDEEDEEEEEKQ. Residues 821–824, K834, and D836 contribute to the ATP site; that span reads QKYI.

It localises to the cell projection. Its subcellular location is the cilium. The protein localises to the cytoplasm. The protein resides in the cytoskeleton. It is found in the cilium axoneme. In terms of biological role, probable glycylase which modifies tubulin, generating side chains of glycine on the gamma-carboxyl groups of specific glutamate residues within the C-terminal tail of tubulin. The protein is Tubulin glycylase 3C (TTLL3C) of Tetrahymena thermophila (strain SB210).